The chain runs to 509 residues: ATP synthase subunit alpha (509 aa).

169 to 176 (GDRQTGKT) serves as a coordination point for ATP.

Belongs to the ATPase alpha/beta chains family. In terms of assembly, F-type ATPases have 2 components, CF(1) - the catalytic core - and CF(0) - the membrane proton channel. CF(1) has five subunits: alpha(3), beta(3), gamma(1), delta(1), epsilon(1). CF(0) has four main subunits: a(1), b(1), b'(1) and c(9-12).

Its subcellular location is the cell inner membrane. It carries out the reaction ATP + H2O + 4 H(+)(in) = ADP + phosphate + 5 H(+)(out). Functionally, produces ATP from ADP in the presence of a proton gradient across the membrane. The alpha chain is a regulatory subunit. This Bradyrhizobium sp. (strain BTAi1 / ATCC BAA-1182) protein is ATP synthase subunit alpha.